Here is a 424-residue protein sequence, read N- to C-terminus: PDZ and LIM domain protein 7 (424 aa).

Residues 1–85 form the PDZ domain; it reads MDSFKVVLEG…RLSLSLSRAQ (85 aa). S78 bears the Phosphoserine mark. Over residues 81–98 the composition is skewed to polar residues; that stretch reads LSRAQPAQSKPQKVQTPD. A disordered region spans residues 81–221; it reads LSRAQPAQSK…HTQPATPTPM (141 aa). Position 96 is a phosphothreonine (T96). Over residues 110-123 the composition is skewed to basic and acidic residues; the sequence is SKQRLMEDTEDWRP. The span at 174–187 shows a compositional bias: pro residues; that stretch reads EPWPGPTTPSPTSR. A compositionally biased stretch (polar residues) spans 204 to 221; sequence KTSTVLTRHTQPATPTPM. 3 LIM zinc-binding domains span residues 247–305, 306–365, and 366–424; these read PVCH…VRYA, PSCA…MFGT, and KCRG…FSHV.

Binds via its LIM zinc-binding 3 domain (LIM 3) domain to endocytic codes of INSR, but not with those of IGF1R, LDLR, TFRC, or EGFR. Interacts with various PKC isoforms through the LIM zinc-binding domains. Binds to RET in a phosphorylation-independent manner via its LIM zinc-binding 2 domain (LIM 2). Probably part of a complex with SHC and the RET dimer. Interacts with TPM2, TBX4 and TBX5.

Its subcellular location is the cytoplasm. The protein resides in the cytoskeleton. Its function is as follows. May function as a scaffold on which the coordinated assembly of proteins can occur. May play a role as an adapter that, via its PDZ domain, localizes LIM-binding proteins to actin filaments of both skeletal muscle and nonmuscle tissues. Involved in both of the two fundamental mechanisms of bone formation, direct bone formation (e.g. embryonic flat bones mandible and cranium), and endochondral bone formation (e.g. embryonic long bone development). Plays a role during fracture repair. Involved in BMP6 signaling pathway. The sequence is that of PDZ and LIM domain protein 7 (PDLIM7) from Bos taurus (Bovine).